The sequence spans 120 residues: Large ribosomal subunit protein bL12 (120 aa).

A compositionally biased stretch (basic and acidic residues) spans 95 to 112 (KEGVSKEEAEEVQGKLEE). The segment at 95-120 (KEGVSKEEAEEVQGKLEEAGASVEVK) is disordered.

The protein belongs to the bacterial ribosomal protein bL12 family. Homodimer. Part of the ribosomal stalk of the 50S ribosomal subunit. Forms a multimeric L10(L12)X complex, where L10 forms an elongated spine to which 2 to 4 L12 dimers bind in a sequential fashion. Binds GTP-bound translation factors.

Functionally, forms part of the ribosomal stalk which helps the ribosome interact with GTP-bound translation factors. Is thus essential for accurate translation. The polypeptide is Large ribosomal subunit protein bL12 (Oceanobacillus iheyensis (strain DSM 14371 / CIP 107618 / JCM 11309 / KCTC 3954 / HTE831)).